The sequence spans 78 residues: Ubiquitin-like protein 1 (78 aa).

It belongs to the ubiquitin family.

In Schizosaccharomyces pombe (strain 972 / ATCC 24843) (Fission yeast), this protein is Ubiquitin-like protein 1 (ubl1).